The chain runs to 108 residues: uncharacterized protein (108 aa).

A disordered region spans residues 1–108 (MAKVTSEPQK…DKEQSETSVL (108 aa)). Positions 26-56 (KGRKKGKTPRQRRSRSGVKGLKTTRKAKRPL) are enriched in basic residues. Residues 58 to 70 (GSSSQKAGETNTP) are compositionally biased toward polar residues. Residues 73–92 (KPKKARGPILRGRYHRLKEK) show a composition bias toward basic residues. Residues 93–108 (MKKEEADKEQSETSVL) are compositionally biased toward basic and acidic residues.

This is an uncharacterized protein from Homo sapiens (Human).